A 125-amino-acid polypeptide reads, in one-letter code: Ribonuclease P protein component (125 aa).

Belongs to the RnpA family. In terms of assembly, consists of a catalytic RNA component (M1 or rnpB) and a protein subunit.

The enzyme catalyses Endonucleolytic cleavage of RNA, removing 5'-extranucleotides from tRNA precursor.. Functionally, RNaseP catalyzes the removal of the 5'-leader sequence from pre-tRNA to produce the mature 5'-terminus. It can also cleave other RNA substrates such as 4.5S RNA. The protein component plays an auxiliary but essential role in vivo by binding to the 5'-leader sequence and broadening the substrate specificity of the ribozyme. The polypeptide is Ribonuclease P protein component (Ruegeria pomeroyi (strain ATCC 700808 / DSM 15171 / DSS-3) (Silicibacter pomeroyi)).